The sequence spans 224 residues: ATP synthase subunit a (224 aa).

A run of 6 helical transmembrane segments spans residues 17 to 37 (LSLN…IYWL), 72 to 92 (IFIS…FPYI), 99 to 119 (LTLT…YGWI), 125 to 145 (MFAH…MVCI), 155 to 175 (GTLA…LTLL), and 184 to 204 (YLLV…ESAV).

The protein belongs to the ATPase A chain family. In terms of assembly, F-type ATPases have 2 components, CF(1) - the catalytic core - and CF(0) - the membrane proton channel. CF(1) has five subunits: alpha(3), beta(3), gamma(1), delta(1), epsilon(1). CF(0) has three main subunits: a, b and c.

It localises to the mitochondrion inner membrane. Mitochondrial membrane ATP synthase (F(1)F(0) ATP synthase or Complex V) produces ATP from ADP in the presence of a proton gradient across the membrane which is generated by electron transport complexes of the respiratory chain. F-type ATPases consist of two structural domains, F(1) - containing the extramembraneous catalytic core and F(0) - containing the membrane proton channel, linked together by a central stalk and a peripheral stalk. During catalysis, ATP synthesis in the catalytic domain of F(1) is coupled via a rotary mechanism of the central stalk subunits to proton translocation. Key component of the proton channel; it may play a direct role in the translocation of protons across the membrane. In Drosophila yakuba (Fruit fly), this protein is ATP synthase subunit a (mt:ATPase6).